Consider the following 141-residue polypeptide: ATP synthase epsilon chain (141 aa).

It belongs to the ATPase epsilon chain family. As to quaternary structure, F-type ATPases have 2 components, CF(1) - the catalytic core - and CF(0) - the membrane proton channel. CF(1) has five subunits: alpha(3), beta(3), gamma(1), delta(1), epsilon(1). CF(0) has three main subunits: a, b and c.

Its subcellular location is the cell inner membrane. Produces ATP from ADP in the presence of a proton gradient across the membrane. This Burkholderia mallei (strain NCTC 10247) protein is ATP synthase epsilon chain.